The following is an 838-amino-acid chain: Translation initiation factor IF-2 (838 aa).

2 disordered regions span residues 30 to 60 and 94 to 254; these read PHTA…KVEE and QRSP…PTGP. Composition is skewed to basic and acidic residues over residues 33–43 and 96–136; these read AAEEHVSDSEK and SPEE…EARR. Positions 137-173 are enriched in low complexity; that stretch reads QPAPVAEPVAAQAAAPAPAPVVEPVQEAPVATAAPAA. 2 stretches are compositionally biased toward basic and acidic residues: residues 174 to 214 and 222 to 231; these read DARK…EKAP and TTDEESDGFR. A compositionally biased stretch (basic residues) spans 232–245; it reads RGGRGKAKLKKRNA. The region spanning 338 to 507 is the tr-type G domain; it reads ARAPVVTVMG…LLQAEVLELK (170 aa). The G1 stretch occupies residues 347 to 354; sequence GHVDHGKT. 347–354 contributes to the GTP binding site; that stretch reads GHVDHGKT. Residues 372 to 376 are G2; it reads GITQH. Residues 393 to 396 form a G3 region; it reads DTPG. Residues 393–397 and 447–450 contribute to the GTP site; these read DTPGH and NKID. The segment at 447–450 is G4; that stretch reads NKID. The G5 stretch occupies residues 483 to 485; the sequence is SAK.

This sequence belongs to the TRAFAC class translation factor GTPase superfamily. Classic translation factor GTPase family. IF-2 subfamily.

It localises to the cytoplasm. Its function is as follows. One of the essential components for the initiation of protein synthesis. Protects formylmethionyl-tRNA from spontaneous hydrolysis and promotes its binding to the 30S ribosomal subunits. Also involved in the hydrolysis of GTP during the formation of the 70S ribosomal complex. The sequence is that of Translation initiation factor IF-2 from Pseudomonas fluorescens (strain ATCC BAA-477 / NRRL B-23932 / Pf-5).